The sequence spans 293 residues: Ribosomal protein L11 methyltransferase (293 aa).

Residues T145, G166, D188, and N230 each coordinate S-adenosyl-L-methionine.

This sequence belongs to the methyltransferase superfamily. PrmA family.

The protein localises to the cytoplasm. It catalyses the reaction L-lysyl-[protein] + 3 S-adenosyl-L-methionine = N(6),N(6),N(6)-trimethyl-L-lysyl-[protein] + 3 S-adenosyl-L-homocysteine + 3 H(+). Functionally, methylates ribosomal protein L11. This chain is Ribosomal protein L11 methyltransferase, found in Pasteurella multocida (strain Pm70).